The sequence spans 522 residues: Maturase K (522 aa).

This sequence belongs to the intron maturase 2 family. MatK subfamily.

The protein resides in the plastid. It localises to the chloroplast. In terms of biological role, usually encoded in the trnK tRNA gene intron. Probably assists in splicing its own and other chloroplast group II introns. The chain is Maturase K from Iris sanguinea (Japanese iris).